We begin with the raw amino-acid sequence, 881 residues long: Low-affinity phosphate transporter PHO90 (881 aa).

Residues 1-288 enclose the SPX domain; sequence MRFSHFLKYN…HLNTRTELIE (288 aa). A run of 12 helical transmembrane segments spans residues 417-437, 456-476, 493-513, 514-534, 539-559, 581-601, 663-683, 691-711, 718-738, 758-778, 805-825, and 854-874; these read IYFI…NDAA, AIPL…FKVL, ILAA…TLGE, VLAQ…FAGC, VLLM…NVAA, AQAL…SSPI, FTVK…LWCV, FGSS…TGLL, AFPW…KAVS, GVFA…TFVS, ILVF…SSGF, and ASIL…ASVV.

This sequence belongs to the CitM (TC 2.A.11) transporter family.

The protein localises to the membrane. In terms of biological role, low-affinity phosphate transporter involved in the control of cellular phosphate levels. The sequence is that of Low-affinity phosphate transporter PHO90 (PHO90) from Saccharomyces cerevisiae (strain ATCC 204508 / S288c) (Baker's yeast).